The sequence spans 721 residues: Protein Hook homolog 2 (721 aa).

Residues 7-123 (VELCDSLLTW…KMVQLVLGCA (117 aa)) enclose the Calponin-homology (CH) domain. Coiled-coil stretches lie at residues 181-425 (LSED…RCSH) and 484-659 (DLQN…EKLI). The interval 696–721 (TNARRGQISRSHTLLPRYTDKRQSLS) is disordered.

The protein belongs to the hook family. As to quaternary structure, interacts with microtubules.

Its subcellular location is the cytoplasm. It is found in the cytoskeleton. The protein localises to the microtubule organizing center. The protein resides in the centrosome. Functionally, may function to promote vesicle trafficking and/or fusion. May contribute to the establishment and maintenance of centrosome function. The protein is Protein Hook homolog 2 (hook2) of Xenopus laevis (African clawed frog).